A 487-amino-acid polypeptide reads, in one-letter code: Gasdermin-D (487 aa).

Position 38 is a phosphotyrosine (tyrosine 38). S-(2-succinyl)cysteine occurs at positions 39, 57, and 77. Beta stranded transmembrane passes span 92–98 and 104–109; these read QGRVMLS and KISGGA. An S-(2-succinyl)cysteine modification is found at cysteine 122. Beta stranded transmembrane passes span 181–187 and 192–198; these read GSGQFTL and CLKGEGK. S-(2-succinyl)cysteine occurs at positions 192 and 265. Cysteine 192 is lipidated: S-palmitoyl cysteine. The linker helix loop stretch occupies residues 278–298; sequence IDEEELIEAADFQGLYAEVKA. 3 positions are modified to S-(2-succinyl)cysteine: cysteine 299, cysteine 434, and cysteine 487.

The protein belongs to the gasdermin family. As to quaternary structure, homooligomer; homooligomeric ring-shaped pore complex containing 27-28 subunits when inserted in the membrane. Homooligomerization is promoted by the mTORC1 complex in macrophages. In response to a canonical inflammasome stimulus, such as nigericin, recruited to NLRP3 inflammasone with similar kinetics to that of uncleaved CASP1 precursor. Although this recruitment is also observed in the absence of PYCARD, it is more efficient in its presence. Post-translationally, cleavage at Asp-276 by CASP1 (mature and uncleaved precursor forms), CASP4/CASP11 or CASP8 relieves autoinhibition and is sufficient to initiate pyroptosis. Cleavage by CASP1 and CASP4/CASP11 is not strictly dependent on the consensus cleavage site on GSDMD but depends on an exosite interface on CASP1 that recognizes and binds the Gasdermin-D, C-terminal (GSDMD-CT) part. Cleavage by CASP8 takes place following inactivation of MAP3K7/TAK1 by Yersinia toxin YopJ. Cleavage at Asp-88 by CASP3 or CASP7 inactivates the ability to mediate pyroptosis, but generates the Gasdermin-D, p13 chain, which translocates to the nucleus and acts as a transcription regulator. Cleavage by papain allergen generates the Gasdermin-D, p40 chain. Palmitoylated at Cys-192 by ZDHHC5 and ZDHHC9 in response to microbial infection and danger signals. May also be palmitoylated by ZDHHC7. Palmitoylation takes place before cleavage by caspases (CASP1, CASP4, CASP5 or CASP8) and is required for membrane translocation and pore formation. Depalmitoylated by LYPLA2. In terms of processing, succination of Cys-192 by the Krebs cycle intermediate fumarate, which leads to S-(2-succinyl)cysteine residues, inhibits processing by caspases, and ability to initiate pyroptosis. Succination modification is catalyzed by a non-enzymatic reaction caused by an accumulation of fumarate. Post-translationally, glycosylated: O-GlcNAcylation by OGT leads to reduced cleavage by CASP4 and decreased LPS-induced endothelial cell pyroptosis. In terms of tissue distribution, highly expressed in brain endothelial cells.

It is found in the cytoplasm. Its subcellular location is the cytosol. It localises to the inflammasome. The protein localises to the cell membrane. The protein resides in the secreted. It is found in the mitochondrion membrane. Its subcellular location is the nucleus. With respect to regulation, the full-length protein before cleavage is inactive: intramolecular interactions between N- and C-terminal domains mediate autoinhibition in the absence of activation signal. The intrinsic pyroptosis-inducing activity is carried by the released N-terminal moiety (Gasdermin-D, N-terminal) following cleavage by inflammatory caspases CASP1, CASP4/CASP11 or CASP8. Cleavage at Asp-88 by CASP3 or CASP7 inactivates the ability to mediate pyroptosis. Pore formation is specifically inhibited by VHH(GSDMD-1) nanobody, protecting against excessive pyroptosis. Inhibited by small molecule NU6300, which covalently reacts with Cys-191, thereby preventing palmitoylation and pyroptosis. In terms of biological role, precursor of a pore-forming protein that plays a key role in host defense against pathogen infection and danger signals. This form constitutes the precursor of the pore-forming protein: upon cleavage, the released N-terminal moiety (Gasdermin-D, N-terminal) binds to membranes and forms pores, triggering pyroptosis. Promotes pyroptosis in response to microbial infection and danger signals. Produced by the cleavage of gasdermin-D by inflammatory caspases CASP1 or CASP4/CASP11 in response to canonical, as well as non-canonical (such as cytosolic LPS) inflammasome activators. After cleavage, moves to the plasma membrane where it strongly binds to inner leaflet lipids, including monophosphorylated phosphatidylinositols, such as phosphatidylinositol 4-phosphate, bisphosphorylated phosphatidylinositols, such as phosphatidylinositol (4,5)-bisphosphate, as well as phosphatidylinositol (3,4,5)-bisphosphate, and more weakly to phosphatidic acid and phosphatidylserine. Homooligomerizes within the membrane and forms pores of 10-15 nanometers (nm) of inner diameter, allowing the release of mature interleukin-1 (IL1B and IL18) and triggering pyroptosis. Gasdermin pores also allow the release of mature caspase-7 (CASP7). In some, but not all, cells types, pyroptosis is followed by pyroptotic cell death, which is caused by downstream activation of ninjurin-1 (NINJ1), which mediates membrane rupture (cytolysis). Also forms pores in the mitochondrial membrane, resulting in release of mitochondrial DNA (mtDNA) into the cytosol. Gasdermin-D, N-terminal released from pyroptotic cells into the extracellular milieu rapidly binds to and kills both Gram-negative and Gram-positive bacteria, without harming neighboring mammalian cells, as it does not disrupt the plasma membrane from the outside due to lipid-binding specificity. Under cell culture conditions, also active against intracellular bacteria, such as Listeria monocytogenes. Also active in response to MAP3K7/TAK1 inactivation by Yersinia toxin YopJ, which triggers cleavage by CASP8 and subsequent activation. Required for mucosal tissue defense against enteric pathogens. Activation of the non-canonical inflammasome in brain endothelial cells can lead to excessive pyroptosis, leading to blood-brain barrier breakdown. Strongly binds to bacterial and mitochondrial lipids, including cardiolipin. Does not bind to unphosphorylated phosphatidylinositol, phosphatidylethanolamine nor phosphatidylcholine. Functionally, transcription coactivator produced by the cleavage by CASP3 or CASP7 in the upper small intestine in response to dietary antigens. Required to maintain food tolerance in small intestine: translocates to the nucleus and acts as a coactivator for STAT1 to induce the transcription of CIITA and MHC class II molecules, which in turn induce type 1 regulatory T (Tr1) cells in upper small intestine. Its function is as follows. Produced by the cleavage by papain allergen. After cleavage, moves to the plasma membrane and homooligomerizes within the membrane and forms pores of 10-15 nanometers (nm) of inner diameter, allowing the specific release of mature interleukin-33 (IL33), promoting type 2 inflammatory immune response. This chain is Gasdermin-D, found in Mus musculus (Mouse).